We begin with the raw amino-acid sequence, 637 residues long: Sodium-dependent nutrient amino acid transporter 1 (637 aa).

Positions 1-17 are enriched in polar residues; sequence MELKTMPQNGANAGTQH. The segment at 1-39 is disordered; the sequence is MELKTMPQNGANAGTQHNNNSNNKPDNNEKEAQKKEPER. Over 1–47 the chain is Cytoplasmic; it reads MELKTMPQNGANAGTQHNNNSNNKPDNNEKEAQKKEPERTNWSNGLE. A compositionally biased stretch (basic and acidic residues) spans 26 to 39; it reads DNNEKEAQKKEPER. The next 3 helical transmembrane spans lie at 48–68, 75–95, and 128–148; these read FLMS…FPFT, GAFL…MYYL, and TICI…YLFV. N-linked (GlcNAc...) asparagine glycosylation is found at Asn181 and Asn195. The next 9 helical transmembrane spans lie at 225–245, 254–274, 303–323, 337–357, 397–417, 443–463, 470–490, 515–535, and 549–569; these read PDWK…LVIM, AAYF…GRAV, AVVQ…MFAS, IVTT…FAIL, LFSA…IVAL, ICGF…ILTL, TYVV…IYGL, FFTP…ISPI, and AGWV…WWYI.

Belongs to the sodium:neurotransmitter symporter (SNF) (TC 2.A.22) family.

It localises to the membrane. Its function is as follows. Unusual broad substrate spectrum amino acid:sodium cotransporter that promotes absorption of the D isomers of essential amino acids. Neutral amino acids are the preferred substrates, especially methionine and phenylalanine. The polypeptide is Sodium-dependent nutrient amino acid transporter 1 (Drosophila virilis (Fruit fly)).